The chain runs to 110 residues: MRRRENMDVNKAIRTAVDTGKVILGSKRTIKFVKHGEGKLVVLAGNIPKDLEEDVKYYAKLSNIPVYQHKITSLELGAVCGKPFPVAALLVLDEGLSNIMELVEKKEGGE.

This sequence belongs to the eukaryotic ribosomal protein eL30 family.

The polypeptide is Large ribosomal subunit protein eL30 (rpl30e) (Methanocaldococcus jannaschii (strain ATCC 43067 / DSM 2661 / JAL-1 / JCM 10045 / NBRC 100440) (Methanococcus jannaschii)).